The chain runs to 291 residues: Serine hydrolase BPHL (291 aa).

A signal peptide spans 1–37; sequence MATATVRPAAQRLRLLLSPLKSRICVPQAEPVATFGT. An AB hydrolase-1 domain is found at 62–173; it reads AILLLPGMLG…ANAYVTEEDS (112 aa). An N6-acetyllysine; alternate modification is found at Lys-74. Lys-74 is modified (N6-succinyllysine; alternate). N6-acetyllysine is present on residues Lys-86 and Lys-119. Lys-126 bears the N6-acetyllysine; alternate mark. An N6-succinyllysine; alternate modification is found at Lys-126. The active-site Nucleophile is the Ser-139. The residue at position 184 (Lys-184) is an N6-succinyllysine. Lys-191 is modified (N6-acetyllysine; alternate). Lys-191 carries the N6-succinyllysine; alternate modification. Lys-217 is subject to N6-acetyllysine. Residue Glu-221 participates in Mg(2+) binding. Lys-243 carries the post-translational modification N6-acetyllysine. The active-site Charge relay system is Asp-244. An N6-acetyllysine; alternate mark is found at Lys-260 and Lys-271. Residues Lys-260 and Lys-271 each carry the N6-succinyllysine; alternate modification. His-272 serves as the catalytic Charge relay system.

Belongs to the AB hydrolase superfamily. Lipase family. Monomer. May also form homodimers.

It localises to the mitochondrion. The enzyme catalyses L-homocysteine thiolactone + H2O = L-homocysteine + H(+). It carries out the reaction valacyclovir + H2O = acyclovir + L-valine + H(+). Functionally, specific alpha-amino acid ester serine hydrolase that prefers small, hydrophobic, and aromatic side chains and does not have a stringent requirement for the leaving group other than preferring a primary alcohol. Has homocysteine-thiolactonase activity (in vitro) and may play a significant role in the detoxification of homocysteine thiolactone in vivo. Catalyzes the hydrolytic activation of amino acid ester prodrugs of nucleoside analogs such as valacyclovir and valganciclovir, converting them into their active forms (acyclovir and ganciclovir). This chain is Serine hydrolase BPHL (Bphl), found in Mus musculus (Mouse).